The primary structure comprises 516 residues: Phosphatidylserine decarboxylase proenzyme 2, mitochondrial (516 aa).

A mitochondrion-targeting transit peptide spans 1-21 (MRPRQRFRRFHPRWSKVNLRG). Residues 22 to 33 (FGGVGALKGVKA) are Mitochondrial matrix-facing. A helical membrane pass occupies residues 34–52 (LNGMNVRVSMRLKWISNRI). The Mitochondrial intermembrane segment spans residues 53–516 (HRIRRSRRLG…GQYVRVGEAL (464 aa)). Catalysis depends on charge relay system; for autoendoproteolytic cleavage activity residues Asp159, His373, and Ser488. Ser488 serves as the catalytic Schiff-base intermediate with substrate; via pyruvic acid; for decarboxylase activity. Ser488 carries the pyruvic acid (Ser); by autocatalysis modification.

This sequence belongs to the phosphatidylserine decarboxylase family. PSD-B subfamily. Eukaryotic type I sub-subfamily. In terms of assembly, heterodimer of a large membrane-associated beta subunit and a small pyruvoyl-containing alpha subunit. Pyruvate is required as a cofactor. Post-translationally, is synthesized initially as an inactive proenzyme. Formation of the active enzyme involves a self-maturation process in which the active site pyruvoyl group is generated from an internal serine residue via an autocatalytic post-translational modification. Two non-identical subunits are generated from the proenzyme in this reaction, and the pyruvate is formed at the N-terminus of the alpha chain, which is derived from the carboxyl end of the proenzyme. The autoendoproteolytic cleavage occurs by a canonical serine protease mechanism, in which the side chain hydroxyl group of the serine supplies its oxygen atom to form the C-terminus of the beta chain, while the remainder of the serine residue undergoes an oxidative deamination to produce ammonia and the pyruvoyl prosthetic group on the alpha chain. During this reaction, the Ser that is part of the protease active site of the proenzyme becomes the pyruvoyl prosthetic group, which constitutes an essential element of the active site of the mature decarboxylase.

The protein resides in the mitochondrion. Its subcellular location is the mitochondrion inner membrane. The protein localises to the nucleus envelope. It is found in the lipid droplet. It localises to the endoplasmic reticulum membrane. The catalysed reaction is a 1,2-diacyl-sn-glycero-3-phospho-L-serine + H(+) = a 1,2-diacyl-sn-glycero-3-phosphoethanolamine + CO2. The protein operates within phospholipid metabolism; phosphatidylethanolamine biosynthesis; phosphatidylethanolamine from CDP-diacylglycerol: step 2/2. Functionally, catalyzes the formation of phosphatidylethanolamine (PtdEtn) from phosphatidylserine (PtdSer). Plays a central role in phospholipid metabolism and in the interorganelle trafficking of phosphatidylserine. Together with psd1 and psd3, responsible for the majority of phosphatidylethanolamine synthesis. Plays a role in lipid droplet biogenesis at the endoplasmic reticulum membrane. This chain is Phosphatidylserine decarboxylase proenzyme 2, mitochondrial, found in Schizosaccharomyces pombe (strain 972 / ATCC 24843) (Fission yeast).